A 127-amino-acid chain; its full sequence is uncharacterized protein (127 aa).

Helical transmembrane passes span 64-84 and 101-118; these read GYYI…FGYL and FFHF…AIYY.

The protein resides in the membrane. This is an uncharacterized protein from Saccharomyces cerevisiae (strain ATCC 204508 / S288c) (Baker's yeast).